Here is a 1221-residue protein sequence, read N- to C-terminus: A disintegrin and metalloproteinase with thrombospondin motifs 18 (1221 aa).

A signal peptide spans M1 to A47. Residues S48–R284 constitute a propeptide that is removed on maturation. Residues N151 and N190 are each glycosylated (N-linked (GlcNAc...) asparagine). Positions H252 to K259 match the Cysteine switch motif. C254 serves as a coordination point for Zn(2+). Residues K258–K291 are disordered. The span at P265–E275 shows a compositional bias: basic and acidic residues. The Peptidase M12B domain maps to L293 to P498. N313 carries N-linked (GlcNAc...) asparagine glycosylation. Intrachain disulfides connect C369-C420, C395-C402, C414-C493, C453-C477, C521-C546, C532-C553, C541-C572, C566-C577, C601-C638, C605-C643, and C616-C628. H436 serves as a coordination point for Zn(2+). Residue E437 is part of the active site. Zn(2+)-binding residues include H440 and H446. A Disintegrin domain is found at P498 to C577. Residues H589–N644 enclose the TSP type-1 1 domain. N-linked (GlcNAc...) asparagine glycosylation is found at N745, N838, and N909. A spacer region spans residues F750–Y876. TSP type-1 domains follow at residues C931–A990, C991–P1049, S1052–P1116, and M1123–P1178. In terms of domain architecture, PLAC spans E1184–I1221.

The cofactor is Zn(2+). In terms of processing, the precursor is cleaved by a furin endopeptidase. Post-translationally, glycosylated. Can be O-fucosylated by POFUT2 on a serine or a threonine residue found within the consensus sequence C1-X(2)-(S/T)-C2-G of the TSP type-1 repeat domains where C1 and C2 are the first and second cysteine residue of the repeat, respectively. Fucosylated repeats can then be further glycosylated by the addition of a beta-1,3-glucose residue by the glucosyltransferase, B3GALTL. Fucosylation mediates the efficient secretion of ADAMTS family members. Can also be C-glycosylated with one or two mannose molecules on tryptophan residues within the consensus sequence W-X-X-W of the TPRs, and N-glycosylated. These other glycosylations can also facilitate secretion. As to expression, expressed in fetal lung, liver, and kidney and in adult brain, prostate, submaxillary gland, and endothelium.

Its subcellular location is the secreted. The protein resides in the extracellular space. It localises to the extracellular matrix. The sequence is that of A disintegrin and metalloproteinase with thrombospondin motifs 18 (ADAMTS18) from Homo sapiens (Human).